A 194-amino-acid polypeptide reads, in one-letter code: Ion-translocating oxidoreductase complex subunit A (194 aa).

A run of 6 helical transmembrane segments spans residues 4 to 24 (LALI…QFLG), 39 to 59 (IGLS…SHIL), 72 to 92 (LRTI…EMLV), 102 to 122 (VLGI…VALL), 135 to 155 (TTQG…FAAL), and 172 to 192 (AIGM…SGLV).

It belongs to the NqrDE/RnfAE family. In terms of assembly, the complex is composed of six subunits: RnfA, RnfB, RnfC, RnfD, RnfE and RnfG.

The protein localises to the cell inner membrane. In terms of biological role, part of a membrane-bound complex that couples electron transfer with translocation of ions across the membrane. The chain is Ion-translocating oxidoreductase complex subunit A from Pseudomonas aeruginosa (strain LESB58).